Reading from the N-terminus, the 854-residue chain is Espin (854 aa).

ANK repeat units follow at residues 1–31 (MALEQALQAARQGELDVLRSLHAAGLLGPSL), 35–64 (LDALPVHHAARAGKLHCLRFLVEEAALPAA), 69–99 (NGATPAHDASATGHLACLQWLLSQGGCRVQD), 103–133 (SGATVLHLAARFGHPEVVNWLLHHGGGDPTA), 137–167 (MGALPIHYAAAKGDFPSLRLLVEHYPEGVNA), 171–201 (NGATPLYLACQEGHLEVTQYLVQECGADPHA), 205–235 (DGMTPLHAAAQMGHSPVIVWLVSCTDVSLSE), 239–268 (DGATAMHFAASRGHTKVLSWLLLHGGEISA), and 271–300 (WGGTPLHDAAENGELECCQILVVNGAELDV). Phosphoserine occurs at positions 338 and 342. The segment covering 338–349 (SRDPSAELEAKQ) has biased composition (basic and acidic residues). Disordered stretches follow at residues 338 to 400 (SRDP…CGLS), 415 to 474 (NPEL…MQTK), 487 to 713 (KELS…AGFQ), 765 to 788 (KMQEEEEQRRKEEEEEARLASMPA), and 800 to 832 (EEREQKRKEEERQKQEELRREKEQSEKLRTLGY). A compositionally biased stretch (polar residues) spans 352–377 (SGMSSPNTTVSVQPLNFDLSSPTSTL). Residues 378 to 389 (SNYDSCSSSHSS) are compositionally biased toward low complexity. Over residues 428–463 (PTPPPPPPSFPPPPPPPGTQLPPPPPGYPAPKPPVG) the composition is skewed to pro residues. The span at 487-505 (KELSSCDGHDGLRRQDSSR) shows a compositional bias: basic and acidic residues. The residue at position 515 (Ser515) is a Phosphoserine. The segment covering 595-620 (LPPPPPPPPPPLPEAASSPPPAPPLP) has biased composition (pro residues). Over residues 633–642 (SSSSTGSTKS) the composition is skewed to low complexity. 2 stretches are compositionally biased toward polar residues: residues 643 to 652 (FNMMSPTGDN) and 667 to 678 (PTPQSKGLTTVF). Ser647 is modified (phosphoserine). Positions 651–668 (DNSELLAEIKAGKSLKPT) constitute a WH2 domain. 2 positions are modified to phosphoserine: Ser690 and Ser696. The segment covering 692 to 703 (LPSVSPALSPVR) has biased composition (low complexity). Residues 756–830 (QVMVRKMQLK…KEQSEKLRTL (75 aa)) are a coiled coil.

In terms of assembly, monomer. Binds F-actin in a Ca(2+)-resistant fashion. Interacts (via N-terminus) with BAIAP2 (via SH3-domain). Interacts with PFN2. Interacts with MYO3A (via C-terminus). Interacts with MYO3B (via C-terminus).

The protein localises to the cytoplasm. It is found in the cytoskeleton. The protein resides in the cell projection. It localises to the stereocilium. Its subcellular location is the microvillus. Its function is as follows. Multifunctional actin-bundling protein. Plays a major role in regulating the organization, dimension, dynamics and signaling capacities of the actin filament-rich microvilli in the mechanosensory and chemosensory cells. Required for the assembly and stabilization of the stereociliary parallel actin bundles. Plays a crucial role in the formation and maintenance of inner ear hair cell stereocilia. Involved in the elongation of actin in stereocilia. In extrastriolar hair cells, required for targeting MYO3B to stereocilia tips, and for regulation of stereocilia diameter and staircase formation. In Homo sapiens (Human), this protein is Espin (ESPN).